The sequence spans 732 residues: Polyribonucleotide nucleotidyltransferase (732 aa).

Mg(2+)-binding residues include Asp483 and Asp489. One can recognise a KH domain in the interval Pro550–Val609. Residues Gly619 to Lys687 form the S1 motif domain. Residues Leu684–Arg732 form a disordered region. Residues Gln702–Gly720 are compositionally biased toward basic and acidic residues.

It belongs to the polyribonucleotide nucleotidyltransferase family. Mg(2+) is required as a cofactor.

It localises to the cytoplasm. The catalysed reaction is RNA(n+1) + phosphate = RNA(n) + a ribonucleoside 5'-diphosphate. Functionally, involved in mRNA degradation. Catalyzes the phosphorolysis of single-stranded polyribonucleotides processively in the 3'- to 5'-direction. The sequence is that of Polyribonucleotide nucleotidyltransferase from Gemmatimonas aurantiaca (strain DSM 14586 / JCM 11422 / NBRC 100505 / T-27).